A 459-amino-acid polypeptide reads, in one-letter code: tRNA uridine(34) acetyltransferase (459 aa).

Residues 1 to 278 (MKKLSRTISG…VPPYVRISRV (278 aa)) form a radical S-adenosyl-L-methionine (rSAM) region. The 266-residue stretch at 6 to 271 (RTISGVTPVA…IADIKALVPP (266 aa)) folds into the Radical SAM core domain. [4Fe-4S] cluster contacts are provided by Cys-23, Cys-27, and Cys-30. Lys-77 contacts acetyl-CoA. An N-acetyltransferase region spans residues 308-459 (QKCRCIRCRE…VAGYMCKHLD (152 aa)). 3 residues coordinate Zn(2+): Cys-310, Cys-312, and Cys-315. Acetyl-CoA is bound by residues 386-389 (ELHV), 409-411 (LGR), and Tyr-442.

Belongs to the ELP3 family. In terms of assembly, homodimer. [4Fe-4S] cluster serves as cofactor.

The enzyme catalyses uridine(34) in tRNA + acetyl-CoA + S-adenosyl-L-methionine + H2O = 5-(carboxymethyl)uridine(34) in tRNA + 5'-deoxyadenosine + L-methionine + CoA + 2 H(+). It participates in tRNA modification. In terms of biological role, tRNA uridine(34) acetyltransferase, which mediates formation of carboxymethyluridine in the wobble base at position 34 in tRNAs. The proposed mechanism is the following: (i) recruits S-adenosyl-L-methionine and cleaves it to generate a 5'-deoxyadenosine radical (5'-dA) in the radical S-adenosyl-L-methionine (rSAM) region, (ii) hydrolyzes acetyl-CoA in the N-acetyltransferase domain and (iii) an acetyl radical is formed by the products of the two domains and (iv) is transferred onto the C5 position of uridine(34) in the bound tRNA molecule. Does not show protein lysine acetyltransferase activity. The sequence is that of tRNA uridine(34) acetyltransferase from Dehalococcoides mccartyi (strain CBDB1).